A 428-amino-acid polypeptide reads, in one-letter code: Acetyltransferase sirH (428 aa).

An N-linked (GlcNAc...) asparagine glycan is attached at N8. A run of 6 helical transmembrane segments spans residues 33-53, 55-75, 78-98, 305-325, 329-349, and 366-386; these read LLTPIFMAVAVLTTLPPPGPL, VIVGLTAFTSLWLHVLTHWVS, AFFMDAIFMISITVRWLLMFV, LYVGFLVSGVQHYACALLIPS, GWGMFWQMPAYAAVVTVEDIL, and FLGYIWTAYWMTLIYALPVGF.

It belongs to the wax synthase family.

It localises to the membrane. It functions in the pathway polyketide biosynthesis. Acetyltransferase; part of the gene cluster that mediates the biosynthesis of asperlin, a polyketide showing anti-inflammatory, antitumor and antibiotic activities. The first step of the asperlin biosynthesis is the production of the intermediate 2,4,6-octatrienoic acid by the highly redusing polyketide synthase alnA with cleavage of the PKS product by the esterase alnB. 2,4,6-octatrienoic acid is further converted to asperlin via several steps involving the remaining enzymes from the cluster. The chain is Acetyltransferase sirH from Emericella nidulans (strain FGSC A4 / ATCC 38163 / CBS 112.46 / NRRL 194 / M139) (Aspergillus nidulans).